Here is a 635-residue protein sequence, read N- to C-terminus: Threonine--tRNA ligase (635 aa).

In terms of domain architecture, TGS spans 1–61 (MINISFPDGS…DNDCKFRILT (61 aa)). The segment at 242-533 (DHRKLGRELD…LIEEYAGRFP (292 aa)) is catalytic. Cysteine 333, histidine 384, and histidine 510 together coordinate Zn(2+).

Belongs to the class-II aminoacyl-tRNA synthetase family. In terms of assembly, homodimer. It depends on Zn(2+) as a cofactor.

It is found in the cytoplasm. The catalysed reaction is tRNA(Thr) + L-threonine + ATP = L-threonyl-tRNA(Thr) + AMP + diphosphate + H(+). Catalyzes the attachment of threonine to tRNA(Thr) in a two-step reaction: L-threonine is first activated by ATP to form Thr-AMP and then transferred to the acceptor end of tRNA(Thr). Also edits incorrectly charged L-seryl-tRNA(Thr). The polypeptide is Threonine--tRNA ligase (Rickettsia rickettsii (strain Sheila Smith)).